The chain runs to 692 residues: Tripartite terminase subunit 1 (692 aa).

The segment at 190 to 218 (CYLCYEELQMTPNNGSSVQKRLNGVLCEH) adopts a C3H1-type zinc-finger fold. Residue 634-641 (YNELYGQR) participates in ATP binding.

It belongs to the herpesviridae TRM1 protein family. In terms of assembly, associates with TRM2 and TRM3 to form the tripartite terminase complex. Interacts with portal protein.

It is found in the host nucleus. Functionally, component of the molecular motor that translocates viral genomic DNA in empty capsid during DNA packaging. Forms a tripartite terminase complex together with TRM2 and TRM3 in the host cytoplasm. Once the complex reaches the host nucleus, it interacts with the capsid portal vertex. This portal forms a ring in which genomic DNA is translocated into the capsid. TRM1 carries an endonuclease activity that plays an important role for the cleavage of concatemeric viral DNA into unit length genomes. This Elephas maximus (Indian elephant) protein is Tripartite terminase subunit 1.